The following is a 22-amino-acid chain: Probable ATP-dependent Clp protease proteolytic subunit (22 aa).

The protein belongs to the peptidase S14 family. Component of the chloroplastic Clp protease core complex.

It carries out the reaction Hydrolysis of proteins to small peptides in the presence of ATP and magnesium. alpha-casein is the usual test substrate. In the absence of ATP, only oligopeptides shorter than five residues are hydrolyzed (such as succinyl-Leu-Tyr-|-NHMec, and Leu-Tyr-Leu-|-Tyr-Trp, in which cleavage of the -Tyr-|-Leu- and -Tyr-|-Trp bonds also occurs).. In terms of biological role, cleaves peptides in various proteins in a process that requires ATP hydrolysis. Has a chymotrypsin-like activity. Plays a major role in the degradation of misfolded proteins. The protein is Probable ATP-dependent Clp protease proteolytic subunit of Populus euphratica (Euphrates poplar).